The following is a 166-amino-acid chain: Probable glucosamine 6-phosphate N-acetyltransferase 2 (166 aa).

An N-acetyltransferase domain is found at 21-166 (VQIRRLEATD…EKGVQMAIYF (146 aa)). Substrate-binding positions include Ser43, 93–96 (KFLR), and 105–107 (EDV). 115–120 (GRGLGL) is an acetyl-CoA binding site. 136–137 (YK) is a binding site for substrate. 150 to 152 (YAK) serves as a coordination point for acetyl-CoA.

The protein belongs to the acetyltransferase family. GNA1 subfamily. Homodimer.

It localises to the endoplasmic reticulum membrane. The catalysed reaction is D-glucosamine 6-phosphate + acetyl-CoA = N-acetyl-D-glucosamine 6-phosphate + CoA + H(+). It participates in nucleotide-sugar biosynthesis; UDP-N-acetyl-alpha-D-glucosamine biosynthesis; N-acetyl-alpha-D-glucosamine 1-phosphate from alpha-D-glucosamine 6-phosphate (route I): step 1/2. In terms of biological role, acetyltransferase involved in UDP-N-acetylglucosamine (UDP-GlcNAc) biosynthesis. UDP-GlcNAc is an essential metabolite that serves as an initial sugar donor of N-glycan synthesis and thus plays an important role in protein and lipid glycosylation. The chain is Probable glucosamine 6-phosphate N-acetyltransferase 2 from Oryza sativa subsp. japonica (Rice).